A 298-amino-acid chain; its full sequence is Cyclin-dependent kinase 1 (298 aa).

Position 2 is an N-acetylserine (Ser-2). Residues 8–295 enclose the Protein kinase domain; the sequence is YKRLEKVGEG…ARRAAIHPYF (288 aa). Residues 14–22 and Lys-40 contribute to the ATP site; that span reads VGEGTYGVV. Tyr-19 bears the Phosphotyrosine mark. Residue Asp-136 is the Proton acceptor of the active site. A Phosphothreonine modification is found at Thr-169.

It belongs to the protein kinase superfamily. CMGC Ser/Thr protein kinase family. CDC2/CDKX subfamily. Forms a stable but non-covalent complex with the CKS1 protein and with a cyclin.

It catalyses the reaction L-seryl-[protein] + ATP = O-phospho-L-seryl-[protein] + ADP + H(+). The enzyme catalyses L-threonyl-[protein] + ATP = O-phospho-L-threonyl-[protein] + ADP + H(+). With respect to regulation, phosphorylation at Thr-18 or Tyr-19 inactivates the enzyme, while phosphorylation at Thr-169 activates it. In terms of biological role, cyclin-dependent kinase that acts as a master regulator of the mitotic and meiotic cell cycles. Required to drive the G1-S transition. More than 200 substrates have been identified. Substrate specificity is in part regulated by the bound cyclin protein. Phosphorylates YTA7 during S-phase to promote transcription of histones. May phosphorylate CNN1, to contribute to the enrichment of CNN1 on anaphase kinetochores. This chain is Cyclin-dependent kinase 1, found in Saccharomyces cerevisiae (strain ATCC 204508 / S288c) (Baker's yeast).